The sequence spans 190 residues: RNA pyrophosphohydrolase (190 aa).

Residues 6 to 149 (GYRPNVGIVL…KRGVYARALC (144 aa)) form the Nudix hydrolase domain. The Nudix box signature appears at 38 to 59 (GGMHSDETPVEAMYRELNEETG).

It belongs to the Nudix hydrolase family. RppH subfamily. A divalent metal cation serves as cofactor.

In terms of biological role, accelerates the degradation of transcripts by removing pyrophosphate from the 5'-end of triphosphorylated RNA, leading to a more labile monophosphorylated state that can stimulate subsequent ribonuclease cleavage. This chain is RNA pyrophosphohydrolase, found in Xylella fastidiosa (strain 9a5c).